A 132-amino-acid chain; its full sequence is MPKQVIIPPGASTPIAPFVPGTLADGVVYVSGTLPFDKANNVVYPGDPKAQTRHVLETIRHVIETAGGTMEDVTFNSIFITDWKNYAAINEIYAEFFPGDKPARFCIQCGLVKPEALVEIATVAHIGPSGGA.

It belongs to the RutC family.

The catalysed reaction is (Z)-3-aminoacrylate + H2O + H(+) = 3-oxopropanoate + NH4(+). Involved in pyrimidine catabolism. Catalyzes the deamination of 3-aminoacrylate to malonic semialdehyde, a reaction that can also occur spontaneously. RutC may facilitate the reaction and modulate the metabolic fitness, rather than catalyzing essential functions. This Cronobacter turicensis (strain DSM 18703 / CCUG 55852 / LMG 23827 / z3032) protein is 3-aminoacrylate deaminase RutC.